Here is a 263-residue protein sequence, read N- to C-terminus: Glucosamine-6-phosphate deaminase (263 aa).

The Proton acceptor; for enolization step role is filled by Asp72. Asp141 serves as the catalytic For ring-opening step. The active-site Proton acceptor; for ring-opening step is the His143. The For ring-opening step role is filled by Glu148.

Belongs to the glucosamine/galactosamine-6-phosphate isomerase family. NagB subfamily.

The enzyme catalyses alpha-D-glucosamine 6-phosphate + H2O = beta-D-fructose 6-phosphate + NH4(+). Its pathway is amino-sugar metabolism; N-acetylneuraminate degradation; D-fructose 6-phosphate from N-acetylneuraminate: step 5/5. Allosterically activated by N-acetylglucosamine 6-phosphate (GlcNAc6P). Catalyzes the reversible isomerization-deamination of glucosamine 6-phosphate (GlcN6P) to form fructose 6-phosphate (Fru6P) and ammonium ion. This is Glucosamine-6-phosphate deaminase from Porphyromonas gingivalis (strain ATCC 33277 / DSM 20709 / CIP 103683 / JCM 12257 / NCTC 11834 / 2561).